Consider the following 792-residue polypeptide: Glucocorticoid receptor (792 aa).

Basic and acidic residues predominate over residues 1–15 (MDSKESLAPPGRDEV). Residues 1–25 (MDSKESLAPPGRDEVPSSLLGRGRG) are disordered. Residues 1 to 436 (MDSKESLAPP…STATGPPPKL (436 aa)) are modulating. R24 bears the Omega-N-methylarginine mark. The residue at position 46 (S46) is a Phosphoserine. A disordered region spans residues 67–98 (SKGSASNAQQQQQQQQQQQQQQQQQPQPDLSK). Low complexity predominate over residues 75-94 (QQQQQQQQQQQQQQQQQPQP). Phosphoserine occurs at positions 131, 152, and 159. The span at 148 to 162 (NRSTSRPENPKSSTP) shows a compositional bias: polar residues. Positions 148–201 (NRSTSRPENPKSSTPAAGCATPTEKEFPQTHSDPSSEQQNRKSQPGTNGGSVKL) are disordered. T168 is subject to Phosphothreonine. Residues 176 to 193 (QTHSDPSSEQQNRKSQPG) show a composition bias toward polar residues. Phosphoserine is present on residues S221, S229, S243, and S284. Residues K294 and K310 each participate in a glycyl lysine isopeptide (Lys-Gly) (interchain with G-Cter in SUMO); alternate cross-link. Glycyl lysine isopeptide (Lys-Gly) (interchain with G-Cter in SUMO2); alternate cross-links involve residues K294 and K310. Phosphoserine occurs at positions 324 and 421. A DNA-binding region (nuclear receptor) is located at residues 434-509 (PKLCLVCSDE…AGMNLEARKT (76 aa)). A Glycyl lysine isopeptide (Lys-Gly) (interchain with G-Cter in ubiquitin) cross-link involves residue K435. 2 consecutive NR C4-type zinc fingers follow at residues 437-457 (CLVCSDEASGCHYGVLTCGSC) and 473-497 (CAGRNDCIIDKIRRKNCPACRYRKC). An N6-acetyllysine mark is found at K496, K508, K510, and K511. Positions 501–792 (GMNLEARKTK…NIKKLLFHQK (292 aa)) are interaction with CLOCK. Residues 503–538 (NLEARKTKKKIKGIQQATAGVSQDTSENANKTIVPA) are hinge. The NR LBD domain occupies 539–773 (ALPQLTPTLV…FPEMLAEIIT (235 aa)). The interaction with CRY1 stretch occupies residues 547 to 712 (LVSLLEVIEP…EIRMTYIKEL (166 aa)). K718 participates in a covalent cross-link: Glycyl lysine isopeptide (Lys-Gly) (interchain with G-Cter in SUMO).

It belongs to the nuclear hormone receptor family. NR3 subfamily. As to quaternary structure, heteromultimeric cytoplasmic complex with HSP90AA1, HSPA1A/HSPA1B, and FKBP5 or another immunophilin such as PPID, STIP1, or the immunophilin homolog PPP5C. Upon ligand binding FKBP5 dissociates from the complex and FKBP4 takes its place, thereby linking the complex to dynein and mediating transport to the nucleus, where the complex dissociates. Probably forms a complex composed of chaperones HSP90 and HSP70, co-chaperones CDC37, PPP5C, TSC1 and client protein TSC2, CDK4, AKT, RAF1 and NR3C1; this complex does not contain co-chaperones STIP1/HOP and PTGES3/p23. Directly interacts with UNC45A. Binds to DNA as a homodimer, and as heterodimer with NR3C2 or the retinoid X receptor. Binds STAT5A and STAT5B homodimers and heterodimers. Interacts with NRIP1, POU2F1, POU2F2 and TRIM28. Interacts with several coactivator complexes, including the SMARCA4 complex, CREBBP/EP300, TADA2L (Ada complex) and p160 coactivators such as NCOA2 and NCOA6. Interaction with BAG1 inhibits transactivation. Interacts with HEXIM1 and TGFB1I1. Interacts with NCOA1. Interacts with NCOA3, SMARCA4, SMARCC1, SMARCD1, and SMARCE1. Interacts with CLOCK, CRY1 and CRY2 in a ligand-dependent fashion. Interacts with CIART. Interacts with RWDD3. Interacts with UBE2I/UBC9 and this interaction is enhanced in the presence of RWDD3. Interacts with GRIP1. Interacts with NR4A3 (via nuclear receptor DNA-binding domain), represses transcription activity of NR4A3 on the POMC promoter Nur response element (NurRE). Directly interacts with PNRC2 to attract and form a complex with UPF1 and DCP1A; the interaction leads to rapid mRNA degradation. Interacts with GSK3B. Interacts with FNIP1 and FNIP2. Interacts (via C-terminus) with HNRNPU (via C-terminus). Interacts with MCM3AP. Interacts (via domain NR LBD) with HSP90AA1 and HSP90AB1. In the absence of hormonal ligand, interacts with TACC1. Interacts (via NR LBD domain) with ZNF764 (via KRAB domain); the interaction regulates transcription factor activity of NR3C1 by directing its actions toward certain biologic pathways. In terms of processing, acetylation by CLOCK reduces its binding to glucocorticoid response elements and its transcriptional activity. Increased proteasome-mediated degradation in response to glucocorticoids. Post-translationally, phosphorylated in the absence of hormone; becomes hyperphosphorylated in the presence of glucocorticoids. Phosphorylated in the absence of hormone; becomes hyperphosphorylated in the presence of glucocorticoid. The Ser-221, Ser-243 and Ser-421-phosphorylated forms are mainly cytoplasmic, and the Ser-229-phosphorylated form is nuclear. Phosphorylation at Ser-229 increases transcriptional activity. Phosphorylation at Ser-221, Ser-243 and Ser-421 decreases signaling capacity. Phosphorylation at Ser-421 may protect from glucocorticoid-induced apoptosis. Phosphorylation at Ser-221 and Ser-229 is not required in regulation of chromosome segregation. May be dephosphorylated by PPP5C, attenuates NR3C1 action. In terms of processing, sumoylation at Lys-294 and Lys-310 negatively regulates its transcriptional activity. Sumoylation at Lys-718 positively regulates its transcriptional activity in the presence of RWDD3. Sumoylation at Lys-294 and Lys-310 is dispensable whereas sumoylation at Lys-718 is critical for the stimulatory effect of RWDD3 on its transcriptional activity. Heat shock increases sumoylation in a RWDD3-dependent manner. Ubiquitinated. Ubiquitination by UBR5 leads to its degradation: UBR5 specifically recognizes and binds ligand-bound NR3C1 when it is not associated with coactivators (NCOAs). In presence of NCOAs, the UBR5-degron is not accessible, preventing its ubiquitination and degradation. As to expression, expressed in spleen, kidney and liver. Expressed in a circadian manner in the liver. Expressed at highest level in spleen with lesser amounts in kidney and liver.

The protein resides in the cytoplasm. Its subcellular location is the nucleus. The protein localises to the mitochondrion. It localises to the cytoskeleton. It is found in the spindle. The protein resides in the microtubule organizing center. Its subcellular location is the centrosome. The protein localises to the chromosome. It localises to the nucleoplasm. In terms of biological role, receptor for glucocorticoids (GC). Has a dual mode of action: as a transcription factor that binds to glucocorticoid response elements (GRE), both for nuclear and mitochondrial DNA, and as a modulator of other transcription factors. Affects inflammatory responses, cellular proliferation and differentiation in target tissues. Involved in chromatin remodeling. Plays a role in rapid mRNA degradation by binding to the 5' UTR of target mRNAs and interacting with PNRC2 in a ligand-dependent manner which recruits the RNA helicase UPF1 and the mRNA-decapping enzyme DCP1A, leading to RNA decay. Could act as a coactivator for STAT5-dependent transcription upon growth hormone (GH) stimulation and could reveal an essential role of hepatic GR in the control of body growth. Functionally, has transcriptional activation and repression activity. Mediates glucocorticoid-induced apoptosis. Promotes accurate chromosome segregation during mitosis. May act as a tumor suppressor. May play a negative role in adipogenesis through the regulation of lipolytic and antilipogenic gene expression. Its function is as follows. Acts as a dominant negative inhibitor of isoform 1. Has intrinsic transcriptional activity independent of isoform Alpha when both isoforms are coexpressed. Loses this transcription modulator function on its own. Has no hormone-binding activity. May play a role in controlling glucose metabolism by maintaining insulin sensitivity. Reduces hepatic gluconeogenesis through down-regulation of PEPCK in an isoform Alpha-dependent manner. Directly regulates STAT1 expression in isoform Alpha-independent manner. This chain is Glucocorticoid receptor (Nr3c1), found in Mus musculus (Mouse).